Reading from the N-terminus, the 185-residue chain is Pro-adrenomedullin (185 aa).

The first 21 residues, 1–21 (MKLVSIALMLLGSLAVLGADT), serve as a signal peptide directing secretion. Arginine amide is present on Arg-41. The propeptide occupies 45 to 91 (ELQASSSYPTGLVDEKTVPTQTLGLQDKQSTSSTPQASTQSTAHIRV). The interval 68 to 89 (GLQDKQSTSSTPQASTQSTAHI) is disordered. Residues 73–87 (QSTSSTPQASTQSTA) are compositionally biased toward low complexity. A disulfide bond links Cys-107 and Cys-112. Residues 125-185 (TDKDKDGMAP…HQDISRVSRL (61 aa)) form a disordered region. At Tyr-143 the chain carries Tyrosine amide. A propeptide spans 150 to 185 (SLPEVLRARTVESSQEQTHSAPASPAHQDISRVSRL) (preproAM C-terminal fragment). A compositionally biased stretch (polar residues) spans 160 to 170 (VESSQEQTHSA).

Belongs to the adrenomedullin family. In terms of tissue distribution, expressed in adrenal glands, lung, kidney, heart, spleen, duodenum and submandibular glands.

The protein localises to the secreted. In terms of biological role, adrenomedullin/ADM and proadrenomedullin N-20 terminal peptide/PAMP are peptide hormones that act as potent hypotensive and vasodilatator agents. Numerous actions have been reported most related to the physiologic control of fluid and electrolyte homeostasis. Its function is as follows. ADM function is mediated by the CALCRL-RAMP2 and CALCRL-RAMP3 receptor complexes with ADM showing the highest potency for the CALCRL-RAMP2 complex. The protein is Pro-adrenomedullin of Rattus norvegicus (Rat).